The primary structure comprises 146 residues: Hemoglobin subunit beta (146 aa).

Val-1 carries the post-translational modification N-acetylvaline. The region spanning 2–146 is the Globin domain; the sequence is HLTPEEKALV…VANALAHKYH (145 aa). An N6-acetyllysine modification is found at Lys-59. A heme b-binding site is contributed by His-63. Lys-82 carries the post-translational modification N6-acetyllysine. Position 92 (His-92) interacts with heme b. Cys-93 carries the post-translational modification S-nitrosocysteine. Lys-144 carries the post-translational modification N6-acetyllysine.

The protein belongs to the globin family. As to quaternary structure, heterotetramer of two alpha chains and two beta chains. In terms of tissue distribution, red blood cells.

Functionally, involved in oxygen transport from the lung to the various peripheral tissues. This chain is Hemoglobin subunit beta (HBB), found in Trichechus inunguis (Amazon manatee).